A 112-amino-acid chain; its full sequence is UPF0342 protein SSA_1465 (112 aa).

Belongs to the UPF0342 family.

The sequence is that of UPF0342 protein SSA_1465 from Streptococcus sanguinis (strain SK36).